Here is a 177-residue protein sequence, read N- to C-terminus: CRIB domain-containing protein RIC8 (177 aa).

Positions 17–30 (IGTPTDVKHVAHIG) constitute a CRIB domain. The span at 72–89 (STRSRDIPRLPKSSRERS) shows a compositional bias: basic and acidic residues. The segment at 72-177 (STRSRDIPRL…SSTSDAGYLT (106 aa)) is disordered. Residues 158–171 (GSQVESISDSSSTS) show a composition bias toward low complexity.

Functionally, functions as a downstream effector of Rho-related GTP binding proteins of the 'Rho of Plants' (ROPs) family. Participates in the propagation of ROP GTPase signals in specific cellular responses. The chain is CRIB domain-containing protein RIC8 (RIC8) from Arabidopsis thaliana (Mouse-ear cress).